Reading from the N-terminus, the 294-residue chain is Factor associated with metabolism and energy (294 aa).

Over residues Met-1–Val-12 the composition is skewed to basic residues. Disordered stretches follow at residues Met-1–Thr-28 and Phe-255–Thr-279. Residue Gly-2 is the site of N-myristoyl glycine attachment. Positions Pro-17–Thr-28 are enriched in polar residues. Residues Lys-268–Thr-279 show a composition bias toward basic and acidic residues.

As to expression, expressed in proximal tubules of the kidney.

It localises to the cell membrane. It is found in the cytoplasmic vesicle. May be involved in tuning the metabolism, energy expenditure, and excretion processes. The polypeptide is Factor associated with metabolism and energy (Mus musculus (Mouse)).